Reading from the N-terminus, the 207-residue chain is Riboflavin synthase (207 aa).

Lumazine-binding repeat units lie at residues 1–94 and 95–191; these read MFTG…LGGH and IVQG…INYL. 2,4-dihydroxypteridine is bound by residues 4–6, 45–47, 59–64, 98–100, K133, 142–144, and 156–161; these read GLV, CLT, DVSPET, GHV, SLT, and NIIPHT.

In terms of assembly, homotrimer.

The enzyme catalyses 2 6,7-dimethyl-8-(1-D-ribityl)lumazine + H(+) = 5-amino-6-(D-ribitylamino)uracil + riboflavin. The protein operates within cofactor biosynthesis; riboflavin biosynthesis; riboflavin from 2-hydroxy-3-oxobutyl phosphate and 5-amino-6-(D-ribitylamino)uracil: step 2/2. Functionally, catalyzes the dismutation of two molecules of 6,7-dimethyl-8-ribityllumazine, resulting in the formation of riboflavin and 5-amino-6-(D-ribitylamino)uracil. In Aquifex aeolicus (strain VF5), this protein is Riboflavin synthase (ribE).